A 323-amino-acid polypeptide reads, in one-letter code: Pseudouridine-5'-phosphate glycosidase (323 aa).

Glutamate 43 (proton donor) is an active-site residue. Lysine 104 and valine 124 together coordinate substrate. Position 156 (aspartate 156) interacts with Mn(2+). 158–160 (SAD) contacts substrate. Lysine 177 serves as the catalytic Nucleophile.

Belongs to the pseudouridine-5'-phosphate glycosidase family. As to quaternary structure, homotrimer. The cofactor is Mn(2+).

The catalysed reaction is D-ribose 5-phosphate + uracil = psi-UMP + H2O. Catalyzes the reversible cleavage of pseudouridine 5'-phosphate (PsiMP) to ribose 5-phosphate and uracil. Functions biologically in the cleavage direction, as part of a pseudouridine degradation pathway. The polypeptide is Pseudouridine-5'-phosphate glycosidase (Streptomyces griseus subsp. griseus (strain JCM 4626 / CBS 651.72 / NBRC 13350 / KCC S-0626 / ISP 5235)).